Reading from the N-terminus, the 87-residue chain is U3-theraphotoxin-Hhn1i (87 aa).

A signal peptide spans M1–A24. The propeptide occupies S25–R52. Cystine bridges form between C54/C67, C61/C72, and C66/C79.

Belongs to the neurotoxin 10 (Hwtx-1) family. 51 (Hntx-8) subfamily. Hntx-8 sub-subfamily. Expressed by the venom gland.

The protein resides in the secreted. Ion channel inhibitor. The polypeptide is U3-theraphotoxin-Hhn1i (Cyriopagopus hainanus (Chinese bird spider)).